We begin with the raw amino-acid sequence, 199 residues long: Protein GrpE (199 aa).

Basic and acidic residues predominate over residues 1–24 (MSKQNKKDWKKFKDEHKEEHKVEN). Residues 1–52 (MSKQNKKDWKKFKDEHKEEHKVENEILEEETDEESQHQEPALGHPSYTALEE) are disordered.

This sequence belongs to the GrpE family. In terms of assembly, homodimer.

The protein localises to the cytoplasm. Participates actively in the response to hyperosmotic and heat shock by preventing the aggregation of stress-denatured proteins, in association with DnaK and GrpE. It is the nucleotide exchange factor for DnaK and may function as a thermosensor. Unfolded proteins bind initially to DnaJ; upon interaction with the DnaJ-bound protein, DnaK hydrolyzes its bound ATP, resulting in the formation of a stable complex. GrpE releases ADP from DnaK; ATP binding to DnaK triggers the release of the substrate protein, thus completing the reaction cycle. Several rounds of ATP-dependent interactions between DnaJ, DnaK and GrpE are required for fully efficient folding. The chain is Protein GrpE from Legionella pneumophila.